Here is a 389-residue protein sequence, read N- to C-terminus: MSFQVSVAVNDGPFQKKSVTPNTTIGDLNNDAILIWKDTAIVYDISDESKNFGPTVTLEQLGVTQISMVYIYTTAFPCPSGDLRSIVPAQVRLISQFASAASSIFNGQSSSSAQSAQRTRRVEQDDEGEKSMFSRKLLDSPATFKALSENMFFRLKNEPHKLGYGLPELVERFLAKKDMTYKEFEQMFRSYVEEEVHKEEIIKNNPNSAEAKMFLEAKRNKELIDEQYLHSMTHHPEDMIAVTMLYINLTINGVPVKAFIDSGAQKSIMSMACAERCGLNGLIDRRFQSMARGVGGTEKIEGKIHLCDVKVEDAHFSCPFEVMARREMDLLIGLNVLRKHGCCINLKTSRLEFGNGTTTPFLQSNEIDSHLKEIMALPEEEMQFEDGST.

The segment at 109–132 is disordered; sequence SSSSAQSAQRTRRVEQDDEGEKSM. Aspartate 261 is an active-site residue.

Belongs to the DDI1 family. Expressed in most tissues.

It localises to the cytoplasm. The protein localises to the nucleus. Its function is as follows. Aspartic protease. Required for the cleavage and activation of transcription factors such as isoform a of the transcription factor skn-1, which in turn regulates the expression of proteasomal subunits such as rpt-3. Plays a key role in the degradation of the potassium channel slo-1, perhaps acting directly, in cleaving slo-1 upstream of the ER-associated degradation pathway (ERAD), and also indirectly, via activation of the transcription factor skn-1, which mediates proteasomal homeostasis. The polypeptide is Protein DDI1 homolog 1 (Caenorhabditis elegans).